A 316-amino-acid polypeptide reads, in one-letter code: N-acetyl-gamma-glutamyl-phosphate reductase (316 aa).

Residue cysteine 136 is part of the active site.

It belongs to the NAGSA dehydrogenase family. Type 1 subfamily.

The protein localises to the cytoplasm. It carries out the reaction N-acetyl-L-glutamate 5-semialdehyde + phosphate + NADP(+) = N-acetyl-L-glutamyl 5-phosphate + NADPH + H(+). Its pathway is amino-acid biosynthesis; L-arginine biosynthesis; N(2)-acetyl-L-ornithine from L-glutamate: step 3/4. Catalyzes the NADPH-dependent reduction of N-acetyl-5-glutamyl phosphate to yield N-acetyl-L-glutamate 5-semialdehyde. The polypeptide is N-acetyl-gamma-glutamyl-phosphate reductase (Xanthomonas campestris pv. campestris (strain ATCC 33913 / DSM 3586 / NCPPB 528 / LMG 568 / P 25)).